Here is an 839-residue protein sequence, read N- to C-terminus: AMP deaminase (839 aa).

A helical membrane pass occupies residues 8-28 (LALAALFGASFVAVSGFFMHF). Residues 40-167 (ERKENPDGDE…DDDDNLTNSE (128 aa)) are disordered. The segment covering 85–94 (DGGGGGGGDT) has biased composition (gly residues). 2 positions are modified to phosphoserine: S134 and S140. A compositionally biased stretch (acidic residues) spans 153 to 162 (SVEESDDDDN). Residue S203 is modified to Phosphoserine. ATP is bound at residue 289 to 296 (AHYPQGKS). Zn(2+) contacts are provided by H391 and H393. Substrate is bound by residues H393 and 462-467 (KFNLKY). Zn(2+) is bound at residue H659. Residue E662 participates in substrate binding. The Proton acceptor role is filled by H681. Position 736 (D736) interacts with Zn(2+). Substrate is bound at residue 737–740 (DPLQ).

Belongs to the metallo-dependent hydrolases superfamily. Adenosine and AMP deaminases family. As to quaternary structure, homodimer. Interacts with AHK4. Interacts with EER5. Zn(2+) serves as cofactor. Expressed in seedlings, roots, leaves, flowers, pollen grains, pollen tubes and siliques, and at a lower level in stems.

Its subcellular location is the membrane. The protein localises to the microsome membrane. It carries out the reaction AMP + H2O + H(+) = IMP + NH4(+). It functions in the pathway purine metabolism; IMP biosynthesis via salvage pathway; IMP from AMP: step 1/1. With respect to regulation, activated by ATP. Activated by sulfate ions (in vitro). Inhibited by phosphate ions. Its function is as follows. AMP deaminase plays a critical role in energy metabolism. Essential for the transition from zygote to embryo. The polypeptide is AMP deaminase (Arabidopsis thaliana (Mouse-ear cress)).